A 278-amino-acid polypeptide reads, in one-letter code: 4-deoxy-L-threo-5-hexosulose-uronate ketol-isomerase (278 aa).

Zn(2+) contacts are provided by His-196, His-198, Glu-203, and His-245.

The protein belongs to the KduI family. It depends on Zn(2+) as a cofactor.

It catalyses the reaction 5-dehydro-4-deoxy-D-glucuronate = 3-deoxy-D-glycero-2,5-hexodiulosonate. The protein operates within glycan metabolism; pectin degradation; 2-dehydro-3-deoxy-D-gluconate from pectin: step 4/5. Catalyzes the isomerization of 5-dehydro-4-deoxy-D-glucuronate to 3-deoxy-D-glycero-2,5-hexodiulosonate. This Salmonella dublin (strain CT_02021853) protein is 4-deoxy-L-threo-5-hexosulose-uronate ketol-isomerase.